The chain runs to 699 residues: Triacylglycerol hydrolase DDHD2 (699 aa).

A compositionally biased stretch (polar residues) spans 1 to 11 (MSSGESHQEQL). The segment at 1 to 25 (MSSGESHQEQLSQSDPSPSPNSCSS) is disordered. A compositionally biased stretch (low complexity) spans 12–25 (SQSDPSPSPNSCSS). Residues 30–112 (DMDASSSYEP…WDELPSEVRR (83 aa)) form the WWE domain. Serine 351 serves as the catalytic Nucleophile. Positions 383–445 (DRGDASTLEE…KILNHFSARK (63 aa)) constitute an SAM domain. Serine 447 carries the post-translational modification Phosphoserine. One can recognise a DDHD domain in the interval 484–688 (LNYKPEIFFA…VLLVLKEIYQ (205 aa)). The interval 599 to 635 (QASETAEETEAEPESSSEKSNEANTEEPPVEVKEEAP) is disordered. Residues 603-613 (TAEETEAEPES) show a composition bias toward acidic residues.

Belongs to the PA-PLA1 family. In terms of assembly, forms homooligomers and, to a much smaller extent, heterooligomers with DDHD1.

The protein resides in the cytoplasm. The protein localises to the cytosol. Its subcellular location is the endoplasmic reticulum-Golgi intermediate compartment. It is found in the golgi apparatus. It localises to the cis-Golgi network. The enzyme catalyses a triacylglycerol + H2O = a diacylglycerol + a fatty acid + H(+). It catalyses the reaction a diacylglycerol + H2O = a monoacylglycerol + a fatty acid + H(+). The catalysed reaction is a 1,3-diacylglycerol + H2O = a 1-acylglycerol + a fatty acid + H(+). It carries out the reaction a 1-acylglycerol + H2O = glycerol + a fatty acid + H(+). The enzyme catalyses 1,2,3-tri-(9Z-octadecenoyl)-glycerol + H2O = di-(9Z)-octadecenoylglycerol + (9Z)-octadecenoate + H(+). It catalyses the reaction di-(9Z)-octadecenoylglycerol + H2O = (9Z-octadecenoyl)-glycerol + (9Z)-octadecenoate + H(+). The catalysed reaction is 1,3-di-(9Z-octadecenoyl)-glycerol + H2O = 1-(9Z-octadecenoyl)-glycerol + (9Z)-octadecenoate + H(+). It carries out the reaction trihexadecanoylglycerol + H2O = dihexadecanoylglycerol + hexadecanoate + H(+). The enzyme catalyses 1,2-di-(9Z-octadecenoyl)-sn-glycero-3-phosphocholine + H2O = (9Z-octadecenoyl)-sn-glycero-3-phosphocholine + (9Z)-octadecenoate + H(+). It catalyses the reaction 1-(9Z-octadecenoyl)-glycerol + H2O = glycerol + (9Z)-octadecenoate + H(+). The catalysed reaction is 1,2-di-(9Z-octadecenoyl)-sn-glycero-3-phosphate + H2O = 2-(9Z-octadecenoyl)-sn-glycero-3-phosphate + (9Z)-octadecenoate + H(+). It carries out the reaction 1-hexadecanoyl-2-(9Z-octadecenoyl)-sn-glycero-3-phosphate + H2O = 2-(9Z-octadecenoyl)-sn-glycero-3-phosphate + hexadecanoate + H(+). The enzyme catalyses 1-hexadecanoyl-2-(9Z-octadecenoyl)-sn-glycero-3-phosphoethanolamine + H2O = 2-(9Z-octadecenoyl)-sn-glycero-3-phosphoethanolamine + hexadecanoate + H(+). It catalyses the reaction 1-hexadecanoyl-2-(9Z-octadecenoyl)-sn-glycero-3-phospho-L-serine + H2O = 2-(9Z-octadecenoyl)-sn-glycero-3-phospho-L-serine + hexadecanoate + H(+). The catalysed reaction is 1-hexadecanoyl-2-(9Z-octadecenoyl)-sn-glycero-3-phosphocholine + H2O = 2-(9Z-octadecenoyl)-sn-glycero-3-phosphocholine + hexadecanoate + H(+). Functionally, diacylglycerol (DAG) and triacylglycerol (TAG) lipase that is required for proper lipid homeostasis in the central nervous system. It cooperates with PNPLA2/ATGL in neuronal TAG catabolism and hydrolyzes sn-1,3-DAG downstream of PNPLA2/ATGL. In vitro, also acts as a phospholipase that hydrolyzes preferentially phosphatidic acids, including 1,2-dioleoyl-sn-phosphatidic acid, phosphatidylcholine and phosphatidylethanolamine. Specifically binds to phosphatidylinositol 3-phosphate (PI(3)P), phosphatidylinositol 4-phosphate (PI(4)P), phosphatidylinositol 5-phosphate (PI(5)P) and possibly phosphatidylinositol 4,5-bisphosphate (PI(4,5)P2). May be involved in the maintenance of the endoplasmic reticulum and/or Golgi structures. May regulate the transport between Golgi apparatus and plasma membrane. This Mus musculus (Mouse) protein is Triacylglycerol hydrolase DDHD2.